The following is a 427-amino-acid chain: Trigger factor (427 aa).

Residues 160–240 (TDTVIGDVEK…VKEVKRLELP (81 aa)) form the PPIase FKBP-type domain.

It belongs to the FKBP-type PPIase family. Tig subfamily.

The protein localises to the cytoplasm. The enzyme catalyses [protein]-peptidylproline (omega=180) = [protein]-peptidylproline (omega=0). In terms of biological role, involved in protein export. Acts as a chaperone by maintaining the newly synthesized protein in an open conformation. Functions as a peptidyl-prolyl cis-trans isomerase. This chain is Trigger factor, found in Chlorobium phaeobacteroides (strain DSM 266 / SMG 266 / 2430).